The following is a 60-amino-acid chain: DNA-directed RNA polymerase subunit Rpo6 (60 aa).

The protein belongs to the archaeal Rpo6/eukaryotic RPB6 RNA polymerase subunit family. As to quaternary structure, part of the RNA polymerase complex.

It localises to the cytoplasm. The catalysed reaction is RNA(n) + a ribonucleoside 5'-triphosphate = RNA(n+1) + diphosphate. DNA-dependent RNA polymerase (RNAP) catalyzes the transcription of DNA into RNA using the four ribonucleoside triphosphates as substrates. The chain is DNA-directed RNA polymerase subunit Rpo6 from Picrophilus torridus (strain ATCC 700027 / DSM 9790 / JCM 10055 / NBRC 100828 / KAW 2/3).